Consider the following 569-residue polypeptide: Arginine--tRNA ligase (569 aa).

The 'HIGH' region motif lies at 123–133; sequence ANPNGPLHVGH.

It belongs to the class-I aminoacyl-tRNA synthetase family.

The protein resides in the cytoplasm. It catalyses the reaction tRNA(Arg) + L-arginine + ATP = L-arginyl-tRNA(Arg) + AMP + diphosphate. This Methanosarcina mazei (strain ATCC BAA-159 / DSM 3647 / Goe1 / Go1 / JCM 11833 / OCM 88) (Methanosarcina frisia) protein is Arginine--tRNA ligase.